Reading from the N-terminus, the 324-residue chain is Putative ribose-phosphate pyrophosphokinase 1 (324 aa).

ATP contacts are provided by residues 43 to 45 (DGE) and 102 to 103 (RQ). A Mg(2+)-binding site is contributed by histidine 136. D-ribose 5-phosphate contacts are provided by residues aspartate 225 and 229–233 (NTGQT).

This sequence belongs to the ribose-phosphate pyrophosphokinase family. Class I subfamily. Homohexamer. Mg(2+) is required as a cofactor.

The protein resides in the cytoplasm. The catalysed reaction is D-ribose 5-phosphate + ATP = 5-phospho-alpha-D-ribose 1-diphosphate + AMP + H(+). It functions in the pathway metabolic intermediate biosynthesis; 5-phospho-alpha-D-ribose 1-diphosphate biosynthesis; 5-phospho-alpha-D-ribose 1-diphosphate from D-ribose 5-phosphate (route I): step 1/1. Its function is as follows. Involved in the biosynthesis of the central metabolite phospho-alpha-D-ribosyl-1-pyrophosphate (PRPP) via the transfer of pyrophosphoryl group from ATP to 1-hydroxyl of ribose-5-phosphate (Rib-5-P). This Enterococcus faecalis (strain ATCC 700802 / V583) protein is Putative ribose-phosphate pyrophosphokinase 1.